Reading from the N-terminus, the 346-residue chain is 4-amino-5-hydroxymethyl-2-methylpyrimidine phosphate synthase (346 aa).

Lys-62 is subject to N6-(pyridoxal phosphate)lysine. His-66 is a catalytic residue. Residue 114 to 117 (GEFG) coordinates pyridoxal 5'-phosphate. Positions 194–198 (CCCFC) match the CCCFC; essential for catalytic activity, may be the site of iron coordination motif.

Belongs to the NMT1/THI5 family. In terms of assembly, homodimer. Requires Fe cation as cofactor.

It localises to the cytoplasm. Its subcellular location is the nucleus. It catalyses the reaction N(6)-(pyridoxal phosphate)-L-lysyl-[4-amino-5-hydroxymethyl-2-methylpyrimidine phosphate synthase] + L-histidyl-[4-amino-5-hydroxymethyl-2-methylpyrimidine phosphate synthase] + 2 Fe(3+) + 4 H2O = L-lysyl-[4-amino-5-hydroxymethyl-2-methylpyrimidine phosphate synthase] + (2S)-2-amino-5-hydroxy-4-oxopentanoyl-[4-amino-5-hydroxymethyl-2-methylpyrimidine phosphate synthase] + 4-amino-2-methyl-5-(phosphooxymethyl)pyrimidine + 3-oxopropanoate + 2 Fe(2+) + 2 H(+). The protein operates within cofactor biosynthesis; thiamine diphosphate biosynthesis. Functionally, responsible for the formation of the pyrimidine heterocycle in the thiamine biosynthesis pathway. Catalyzes the formation of hydroxymethylpyrimidine phosphate (HMP-P) from histidine and pyridoxal phosphate (PLP). The protein uses PLP and the active site histidine to form HMP-P, generating an inactive enzyme. The enzyme can only undergo a single turnover, which suggests it is a suicide enzyme. The polypeptide is 4-amino-5-hydroxymethyl-2-methylpyrimidine phosphate synthase (Schizosaccharomyces pombe (strain 972 / ATCC 24843) (Fission yeast)).